The primary structure comprises 123 residues: Ribonuclease P protein component (123 aa).

This sequence belongs to the RnpA family. As to quaternary structure, consists of a catalytic RNA component (M1 or rnpB) and a protein subunit.

It catalyses the reaction Endonucleolytic cleavage of RNA, removing 5'-extranucleotides from tRNA precursor.. Functionally, RNaseP catalyzes the removal of the 5'-leader sequence from pre-tRNA to produce the mature 5'-terminus. It can also cleave other RNA substrates such as 4.5S RNA. The protein component plays an auxiliary but essential role in vivo by binding to the 5'-leader sequence and broadening the substrate specificity of the ribozyme. The polypeptide is Ribonuclease P protein component (Bordetella bronchiseptica (strain ATCC BAA-588 / NCTC 13252 / RB50) (Alcaligenes bronchisepticus)).